We begin with the raw amino-acid sequence, 31 residues long: Photosystem II reaction center protein T (31 aa).

A helical transmembrane segment spans residues 3 to 23 (SFAYILILAFSIGTLFFAIAL).

This sequence belongs to the PsbT family. PSII is composed of 1 copy each of membrane proteins PsbA, PsbB, PsbC, PsbD, PsbE, PsbF, PsbH, PsbI, PsbJ, PsbK, PsbL, PsbM, PsbT, PsbX, PsbY, PsbZ, Psb30/Ycf12, peripheral proteins PsbO, CyanoQ (PsbQ), PsbU, PsbV and a large number of cofactors. It forms dimeric complexes.

The protein localises to the cellular thylakoid membrane. Its function is as follows. Found at the monomer-monomer interface of the photosystem II (PS II) dimer, plays a role in assembly and dimerization of PSII. PSII is a light-driven water plastoquinone oxidoreductase, using light energy to abstract electrons from H(2)O, generating a proton gradient subsequently used for ATP formation. The protein is Photosystem II reaction center protein T of Synechococcus sp. (strain RCC307).